Consider the following 576-residue polypeptide: MKYVVVSGGVISGIGKGVLASSTGMLLKTLGLKVTSIKIDPYMNLDAGTMSPLEHGECFVLNDGGETDLDLGNYERYLGVTLTKDHNITTGKVYSHVMAKERKGDYLGKTVQVVPHLTNAIQDWLERVARIPVDDSGMEPDVCIIELGGTVGDIESAPFVEALRQFQFRVGRDNFALIHVSLVPVIHGEQKTKPTQAAIKDLRSLGLTPDMIACRCSEELDKPTIEKIAMFCHVGPEQVVNVHDVASTYHVPLLLLEQRMIDYLGQRLKLSDIKLGAEDKERGARLLDRWRHLTTAIDESFEVVQIALVGKYTHLKDSYLSVIKALEHSSMRCKRKLEIVWVEASDLEPEMSASDKEKFQQAWKSLSSSDGILVPGGFGTRGTEGMILAAKWARENKIPYLGVCLGLQVATIEFARHVLGIADATSSEFYPEVAEDKQVVVYMPEIDKQNMGGTMRLGLRPTIFQEDTDWSIIRKLYGSASSVEERHRHRYEINPKMVQKLEEHGLKFVGRDETGTRCEILELVDHPYYVATQYHPEYMSKVLDPSQPFLGLVAAAANILPSLLAAERAVGARADF.

The Glutamine amidotransferase type-1 domain maps to 305–559; that stretch reads QIALVGKYTH…LGLVAAAANI (255 aa). Catalysis depends on for GATase activity residues cysteine 404, histidine 535, and glutamate 537.

It belongs to the CTP synthase family.

It catalyses the reaction UTP + L-glutamine + ATP + H2O = CTP + L-glutamate + ADP + phosphate + 2 H(+). The protein operates within pyrimidine metabolism; CTP biosynthesis via de novo pathway; CTP from UDP: step 2/2. Functionally, catalyzes the ATP-dependent amination of UTP to CTP with either L-glutamine or ammonia as the source of nitrogen. The polypeptide is CTP synthase (URA7) (Eremothecium gossypii (strain ATCC 10895 / CBS 109.51 / FGSC 9923 / NRRL Y-1056) (Yeast)).